Here is a 554-residue protein sequence, read N- to C-terminus: Protein SINE2 (554 aa).

Residues 17–290 are ARMADILLO-type fold; that stretch reads DKDPDSHKTA…MAAHETMRQA (274 aa). Disordered stretches follow at residues 306 to 332, 411 to 442, and 465 to 487; these read CKPR…VYSR, NESV…KHHR, and ETSS…TTED. Residues 311-321 show a composition bias toward low complexity; it reads SLSGSVKSTSS. Over residues 322-332 the composition is skewed to basic and acidic residues; that stretch reads LREHDGSVYSR. The segment covering 419-431 has biased composition (basic residues); it reads NRSRSSRRNTKKR. Residues 465 to 485 are compositionally biased toward low complexity; it reads ETSSSSSIYDTSGTTTPTNTT. Residues 509-554 enclose the KASH domain; sequence LDPRLGRSKGVLKLGLSVFSIAVAGFASFMWMYLQDDMMPPHLVPT. A helical transmembrane segment spans residues 522 to 542; sequence LGLSVFSIAVAGFASFMWMYL. The Required for nuclear localization signature appears at 551–554; the sequence is LVPT.

In terms of assembly, interacts with SUN1 and SUN2. In terms of tissue distribution, expressed in epidermal cells, mesophyll cells, trichomes and root cells.

It localises to the nucleus membrane. Plays a role in innate immunity against the oomycete pathogen A.arabidopsidis (Hpa). The protein is Protein SINE2 of Arabidopsis thaliana (Mouse-ear cress).